A 142-amino-acid chain; its full sequence is Midkine-B (142 aa).

The first 20 residues, 1-20 (MELRAFCVILLITILAVSSQ), serve as a signal peptide directing secretion. Disulfide bonds link cysteine 36–cysteine 60, cysteine 44–cysteine 69, cysteine 51–cysteine 73, cysteine 83–cysteine 115, and cysteine 93–cysteine 125.

The protein belongs to the pleiotrophin family. As to expression, in adults, expression is highest in the brain, eye and bone, with lower expression in the heart and lung. Not expressed in the ovary. In the tailbud stage embryo, expressed in the head and tail regions as well as in the central nervous system (CNS).

It is found in the secreted. In terms of biological role, secreted protein that functions as a cytokine and growth factor and mediates its signal through cell-surface proteoglycan and non-proteoglycan receptors. Binds cell-surface proteoglycan receptors via their chondroitin sulfate (CS) groups. Thereby regulates many processes like inflammatory response, cell proliferation, cell adhesion, cell growth, cell survival, tissue regeneration, cell differentiation and cell migration. Inhibits mesoderm formation and promotes neural formation during development. Plays a role in development of the neuromuscular junction (NMJ). Has antibacterial activity against both Gram-positive and Gram-negative bacteria. This Xenopus laevis (African clawed frog) protein is Midkine-B (mdk-b).